The chain runs to 160 residues: Protein-export protein SecB (160 aa).

The protein belongs to the SecB family. In terms of assembly, homotetramer, a dimer of dimers. One homotetramer interacts with 1 SecA dimer.

It localises to the cytoplasm. Functionally, one of the proteins required for the normal export of preproteins out of the cell cytoplasm. It is a molecular chaperone that binds to a subset of precursor proteins, maintaining them in a translocation-competent state. It also specifically binds to its receptor SecA. This Aliivibrio salmonicida (strain LFI1238) (Vibrio salmonicida (strain LFI1238)) protein is Protein-export protein SecB.